The primary structure comprises 210 residues: 3-hexulose-6-phosphate synthase (210 aa).

The protein belongs to the HPS/KGPDC family. HPS subfamily.

It carries out the reaction D-ribulose 5-phosphate + formaldehyde = D-arabino-hex-3-ulose 6-phosphate. It functions in the pathway one-carbon metabolism; formaldehyde assimilation via RuMP pathway; D-fructose 6-phosphate from D-ribulose 5-phosphate and formaldehyde: step 1/2. In terms of biological role, catalyzes the condensation of ribulose 5-phosphate with formaldehyde to form 3-hexulose 6-phosphate. In Staphylococcus aureus (strain USA300), this protein is 3-hexulose-6-phosphate synthase.